Here is a 392-residue protein sequence, read N- to C-terminus: Potassium/proton antiporter CemA (392 aa).

Helical transmembrane passes span 174–194 (FLAS…VWWL), 269–289 (SLAN…MLSL), 316–336 (FLIL…WEVI), and 352–372 (FIFM…KYWI).

It belongs to the CemA family.

It is found in the plastid. Its subcellular location is the chloroplast inner membrane. It catalyses the reaction K(+)(in) + H(+)(out) = K(+)(out) + H(+)(in). Functionally, contributes to K(+)/H(+) antiport activity by supporting proton efflux to control proton extrusion and homeostasis in chloroplasts in a light-dependent manner to modulate photosynthesis. Prevents excessive induction of non-photochemical quenching (NPQ) under continuous-light conditions. Indirectly promotes efficient inorganic carbon uptake into chloroplasts. This is Potassium/proton antiporter CemA from Nephroselmis olivacea (Green alga).